A 426-amino-acid polypeptide reads, in one-letter code: Phosphomethylpyrimidine synthase (426 aa).

Residues N65, M94, Y123, H162, 184–186, 225–228, and E264 contribute to the substrate site; these read SRG and DGMR. Residue H268 coordinates Zn(2+). Y291 provides a ligand contact to substrate. Zn(2+) is bound at residue H332. [4Fe-4S] cluster contacts are provided by C408, C411, and C415.

This sequence belongs to the ThiC family. [4Fe-4S] cluster serves as cofactor.

It carries out the reaction 5-amino-1-(5-phospho-beta-D-ribosyl)imidazole + S-adenosyl-L-methionine = 4-amino-2-methyl-5-(phosphooxymethyl)pyrimidine + CO + 5'-deoxyadenosine + formate + L-methionine + 3 H(+). The protein operates within cofactor biosynthesis; thiamine diphosphate biosynthesis. Catalyzes the synthesis of the hydroxymethylpyrimidine phosphate (HMP-P) moiety of thiamine from aminoimidazole ribotide (AIR) in a radical S-adenosyl-L-methionine (SAM)-dependent reaction. This is Phosphomethylpyrimidine synthase from Methanococcus maripaludis (strain C7 / ATCC BAA-1331).